Here is a 372-residue protein sequence, read N- to C-terminus: Ligninase B (372 aa).

A signal peptide spans 1–21; that stretch reads MAFKQLFAAISLALSLSAANA. A propeptide spanning residues 22–28 is cleaved from the precursor; sequence AAVIEKR. 4 disulfides stabilise this stretch: cysteine 31-cysteine 43, cysteine 42-cysteine 313, cysteine 62-cysteine 148, and cysteine 277-cysteine 345. Histidine 75 (proton acceptor) is an active-site residue. Ca(2+) contacts are provided by aspartate 76, glycine 94, aspartate 96, and serine 98. Histidine 204 is a heme b binding site. Residues serine 205, aspartate 222, threonine 224, isoleucine 227, and aspartate 229 each coordinate Ca(2+). Asparagine 285 is a glycosylation site (N-linked (GlcNAc...) asparagine). Residues 350-361 show a composition bias toward low complexity; that stretch reads FPTLTTLPGPET. Residues 350–372 are disordered; that stretch reads FPTLTTLPGPETSVQRIPPPPGA.

Belongs to the peroxidase family. Ligninase subfamily. It depends on heme b as a cofactor. Requires Ca(2+) as cofactor.

It carries out the reaction 1-(3,4-dimethoxyphenyl)-2-(2-methoxyphenoxy)propane-1,3-diol + H2O2 = 3,4-dimethoxybenzaldehyde + guaiacol + glycolaldehyde + H2O. It catalyses the reaction 2 (3,4-dimethoxyphenyl)methanol + H2O2 = 2 (3,4-dimethoxyphenyl)methanol radical + 2 H2O. Its pathway is secondary metabolite metabolism; lignin degradation. Depolymerization of lignin. Catalyzes the C(alpha)-C(beta) cleavage of the propyl side chains of lignin. In Phanerodontia chrysosporium (White-rot fungus), this protein is Ligninase B (LIPB).